The chain runs to 93 residues: uncharacterized protein (93 aa).

The 76-residue stretch at 1-76 (MDSHTTEKRR…IQTIEPDESM (76 aa)) folds into the Sm domain.

As to quaternary structure, part of the core SMN complex at least composed of smn1, yip11/gem2, gem6, gem7 and gem8. Interacts with gem7; the interaction is direct.

In terms of biological role, the SMN complex catalyzes the assembly of small nuclear ribonucleoproteins (snRNPs), the building blocks of the spliceosome, and thereby plays an important role in the splicing of cellular pre-mRNAs. Most spliceosomal snRNPs contain a common set of Sm proteins smb1, smd1, smd2, smd3, sme1, smf1 and smg1 that assemble in a heptameric protein ring on the Sm site of the small nuclear RNA to form the core snRNP (Sm core). In the cytosol, the Sm proteins smd1, smd2, sme1, smf1 and smg1 (5Sm) are trapped in an inactive 6S pICln-Sm complex by the chaperone saf5. To complete assembly of core snRNPs, the SMN complex accepts 5Sm from saf5. Binding of snRNA inside 5Sm triggers eviction of the SMN complex, thereby allowing binding of smd3 and smb1 to complete assembly of the core snRNP. This is an uncharacterized protein from Schizosaccharomyces pombe (strain 972 / ATCC 24843) (Fission yeast).